Here is a 307-residue protein sequence, read N- to C-terminus: UDP-3-O-acyl-N-acetylglucosamine deacetylase (307 aa).

Histidine 78, histidine 241, and aspartate 245 together coordinate Zn(2+). Histidine 268 (proton donor) is an active-site residue.

The protein belongs to the LpxC family. Zn(2+) is required as a cofactor.

It carries out the reaction a UDP-3-O-[(3R)-3-hydroxyacyl]-N-acetyl-alpha-D-glucosamine + H2O = a UDP-3-O-[(3R)-3-hydroxyacyl]-alpha-D-glucosamine + acetate. It participates in glycolipid biosynthesis; lipid IV(A) biosynthesis; lipid IV(A) from (3R)-3-hydroxytetradecanoyl-[acyl-carrier-protein] and UDP-N-acetyl-alpha-D-glucosamine: step 2/6. Catalyzes the hydrolysis of UDP-3-O-myristoyl-N-acetylglucosamine to form UDP-3-O-myristoylglucosamine and acetate, the committed step in lipid A biosynthesis. In Acidovorax ebreus (strain TPSY) (Diaphorobacter sp. (strain TPSY)), this protein is UDP-3-O-acyl-N-acetylglucosamine deacetylase.